The following is a 534-amino-acid chain: Beta-1,2-xylosyltransferase (534 aa).

Residues 1-11 (MSKRNPKILKI) are Cytoplasmic-facing. Residues 12–34 (FLYMLLLNSLFLIIYFVFHSSSF) traverse the membrane as a helical; Signal-anchor for type II membrane protein segment. Topologically, residues 35-534 (SPEQSQPPHI…LTEIMKSLGC (500 aa)) are lumenal. Asparagine 51, asparagine 301, and asparagine 479 each carry an N-linked (GlcNAc...) asparagine glycan.

Post-translationally, glycosylation at least at one of the two sites Asn-51 and Asn-301 is necessary for enzyme stability and activity.

Its subcellular location is the golgi apparatus membrane. It carries out the reaction N(4)-{beta-D-GlcNAc-(1-&gt;2)-alpha-D-Man-(1-&gt;3)-[beta-D-GlcNAc-(1-&gt;2)-alpha-D-Man-(1-&gt;6)]-beta-D-Man-(1-&gt;4)-beta-D-GlcNAc-(1-&gt;4)-beta-D-GlcNAc}-L-asparaginyl-[protein] + UDP-alpha-D-xylose = N(4)-{beta-D-GlcNAc-(1-&gt;2)-alpha-D-Man-(1-&gt;3)-[beta-D-GlcNAc-(1-&gt;2)-alpha-D-Man-(1-&gt;6)]-[beta-D-Xyl-(1-&gt;2)]-beta-D-Man-(1-&gt;4)-beta-D-GlcNAc-(1-&gt;4)-beta-D-GlcNAc}-L-asparaginyl-[protein] + UDP + H(+). It participates in protein modification; protein glycosylation. Functionally, glycosyltransferase involved in the xylosylation of N-glycans. Possesses beta-1,2-xylosyltransferase activity, transferring xylose from UDP-xylose to the core beta-linked mannose of N-glycans. Involved in the biosynthesis of glycoprotein bound N-glycans. Does not require metal ions for its activity. In Arabidopsis thaliana (Mouse-ear cress), this protein is Beta-1,2-xylosyltransferase.